The sequence spans 133 residues: Small ribosomal subunit protein uS8 (133 aa).

This sequence belongs to the universal ribosomal protein uS8 family. As to quaternary structure, part of the 30S ribosomal subunit. Contacts proteins S5 and S12.

One of the primary rRNA binding proteins, it binds directly to 16S rRNA central domain where it helps coordinate assembly of the platform of the 30S subunit. The chain is Small ribosomal subunit protein uS8 from Orientia tsutsugamushi (strain Ikeda) (Rickettsia tsutsugamushi).